The primary structure comprises 497 residues: RNA-splicing ligase RtcB homolog (497 aa).

5 residues coordinate Mn(2+): D111, C114, H219, H251, and H345. 218–222 (NHYAE) provides a ligand contact to GMP. Residues 345 to 346 (HN), 394 to 397 (GGTM), S401, 420 to 423 (HGAG), and K496 contribute to the GMP site. Catalysis depends on H420, which acts as the GMP-histidine intermediate.

This sequence belongs to the RtcB family. Catalytic component of the tRNA-splicing ligase complex. Requires Mn(2+) as cofactor.

The catalysed reaction is a 3'-end 3'-phospho-ribonucleotide-RNA + a 5'-end dephospho-ribonucleoside-RNA + GTP = a ribonucleotidyl-ribonucleotide-RNA + GMP + diphosphate. The enzyme catalyses a 3'-end 2',3'-cyclophospho-ribonucleotide-RNA + a 5'-end dephospho-ribonucleoside-RNA + GTP + H2O = a ribonucleotidyl-ribonucleotide-RNA + GMP + diphosphate + H(+). Catalytic subunit of the tRNA-splicing ligase complex that acts by directly joining spliced tRNA halves to mature-sized tRNAs by incorporating the precursor-derived splice junction phosphate into the mature tRNA as a canonical 3',5'-phosphodiester. May act as an RNA ligase with broad substrate specificity, and may function toward other RNAs. The polypeptide is RNA-splicing ligase RtcB homolog (Monosiga brevicollis (Choanoflagellate)).